Consider the following 118-residue polypeptide: Ribonuclease P protein component (118 aa).

It belongs to the RnpA family. Consists of a catalytic RNA component (M1 or rnpB) and a protein subunit.

The enzyme catalyses Endonucleolytic cleavage of RNA, removing 5'-extranucleotides from tRNA precursor.. Its function is as follows. RNaseP catalyzes the removal of the 5'-leader sequence from pre-tRNA to produce the mature 5'-terminus. It can also cleave other RNA substrates such as 4.5S RNA. The protein component plays an auxiliary but essential role in vivo by binding to the 5'-leader sequence and broadening the substrate specificity of the ribozyme. The polypeptide is Ribonuclease P protein component (Mycobacterium sp. (strain KMS)).